The sequence spans 147 residues: Cyanate hydratase (147 aa).

Active-site residues include arginine 88, glutamate 91, and serine 114.

Belongs to the cyanase family.

The catalysed reaction is cyanate + hydrogencarbonate + 3 H(+) = NH4(+) + 2 CO2. In terms of biological role, catalyzes the reaction of cyanate with bicarbonate to produce ammonia and carbon dioxide. This is Cyanate hydratase from Polynucleobacter asymbioticus (strain DSM 18221 / CIP 109841 / QLW-P1DMWA-1) (Polynucleobacter necessarius subsp. asymbioticus).